Here is a 394-residue protein sequence, read N- to C-terminus: Protein TsgA homolog (394 aa).

Helical transmembrane passes span 11 to 31, 51 to 71, 76 to 96, 101 to 121, 134 to 154, 160 to 180, 206 to 226, 246 to 266, 274 to 294, 297 to 317, 334 to 354, and 363 to 383; these read WISFFSYALTGALVIVTGMVM, FLNTGILVSIFLNAWLMEIIP, LVFGFILMILAIAGLMVGHNL, ACMFVLGVVSGITMSIGTFLI, LLFTDSFFSMAGMVFPIIAAT, VAWYWVYACIGVLYLAIFILT, IGVLFLSIAALCYILGQLGFI, GLVSNFWTAYMVGMWFFSVAL, IVTVLAALSTFMMYMFVSSQQ, MLSMYILGLGFVSSAIYTTLI, FILTCGTIGTMLTFVVTGPIV, and LATANGLYLVVFVMCVLLGFV.

This sequence belongs to the major facilitator superfamily. TsgA family.

The protein resides in the cell inner membrane. The polypeptide is Protein TsgA homolog (Edwardsiella ictaluri (strain 93-146)).